Reading from the N-terminus, the 194-residue chain is 22 kDa relaxation protein (194 aa).

In terms of biological role, this protein is probably required for relaxation complex formation. The protein is 22 kDa relaxation protein of Salmonella typhimurium.